Consider the following 589-residue polypeptide: NADPH-dependent diflavin oxidoreductase 1 (589 aa).

One can recognise a Flavodoxin-like domain in the interval 5–151; the sequence is ITILYGSETG…YYIEWEAELI (147 aa). FMN contacts are provided by residues 11–16, 60–63, 98–107, and glutamate 133; these read SETGNA, STTG, and VGDSSYVKYN. Residues 202 to 439 enclose the FAD-binding FR-type domain; sequence DGLKLGTVLE…SIQRSSFKYK (238 aa). FAD contacts are provided by residues arginine 349, 380–383, and 412–415; these read RMFS and GVCT. Residues threonine 452 and 507–508 contribute to the NADP(+) site; that span reads SR. FAD is bound at residue tryptophan 589.

This sequence belongs to the NADPH-dependent diflavin oxidoreductase NDOR1 family. The protein in the N-terminal section; belongs to the flavodoxin family. It in the C-terminal section; belongs to the flavoprotein pyridine nucleotide cytochrome reductase family. As to quaternary structure, interacts with DRE2; as part of the cytosolic iron-sulfur (Fe-S) protein assembly (CIA) machinery. The cofactor is FAD. FMN is required as a cofactor.

It localises to the cytoplasm. The protein resides in the mitochondrion. The enzyme catalyses 2 oxidized [2Fe-2S]-[protein] + NADPH = 2 reduced [2Fe-2S]-[protein] + NADP(+) + H(+). NADPH-dependent reductase which is a central component of the cytosolic iron-sulfur (Fe-S) protein assembly (CIA) machinery. Transfers electrons from NADPH via its FAD and FMN prosthetic groups to the [2Fe-2S] cluster of DRE2, another key component of the CIA machinery. In turn, this reduced cluster provides electrons for assembly of cytosolic iron-sulfur cluster proteins. Positively controls H(2)O(2)-induced cell death. The polypeptide is NADPH-dependent diflavin oxidoreductase 1 (Candida albicans (strain SC5314 / ATCC MYA-2876) (Yeast)).